The chain runs to 216 residues: LHFPL tetraspan subfamily member 3 protein (216 aa).

4 helical membrane-spanning segments follow: residues 22-42, 96-116, 126-146, and 177-197; these read IGVLWAIFTTLFAIVNVVCFV, FFIGMSMVLVLSCIGCFALFF, ICGWMQLAAGTCLVLGCMIYP, and ILAIMGILDALILSFLAFVLG.

The protein belongs to the LHFP family.

The protein resides in the membrane. This Danio rerio (Zebrafish) protein is LHFPL tetraspan subfamily member 3 protein.